The primary structure comprises 191 residues: COP9 signalosome complex subunit 8 (191 aa).

The PCI domain maps to 6–179 (MMAELDEKLL…VSLVPNEQQL (174 aa)).

This sequence belongs to the CSN8 family. Component of the CSN complex, probably composed of cops1, cops2, cops3, cops4, cops5, cops6, cops7, cops8 and cops9.

Its subcellular location is the cytoplasm. The protein resides in the nucleus. Functionally, component of the COP9 signalosome complex (CSN), a complex involved in various cellular and developmental processes. The CSN complex is an essential regulator of the ubiquitin (Ubl) conjugation pathway by mediating the deneddylation of the cullin subunits of E3 ligase complexes, leading to modify the Ubl ligase activity. This is COP9 signalosome complex subunit 8 (cops8) from Danio rerio (Zebrafish).